The following is a 681-amino-acid chain: Macrolide export ATP-binding/permease protein MacB (681 aa).

The ABC transporter domain maps to 6–244 (LKLAAVTRRF…FAEVGVGAAA (239 aa)). 42–49 (GASGSGKS) contacts ATP. Residues 246–273 (TETAADTRSAPASGDAPPPANNDTAADP) show a composition bias toward low complexity. Residues 246–298 (TETAADTRSAPASGDAPPPANNDTAADPAPAPDASPPAPAVSPKHAGWRGSRS) are disordered. Residues 274–285 (APAPDASPPAPA) show a composition bias toward pro residues. 4 consecutive transmembrane segments (helical) span residues 306–326 (CLTMLGIIIGITSVVSIVAVG), 554–574 (LTLLLSLIAVISLVVGGIGVM), 611–631 (LVCLLGGTIGIALSFGLGALF), and 644–664 (AGAIVTAFVCSTLTGVIFGFM).

It belongs to the ABC transporter superfamily. Macrolide exporter (TC 3.A.1.122) family. As to quaternary structure, homodimer.

It is found in the cell inner membrane. Functionally, non-canonical ABC transporter that contains transmembrane domains (TMD), which form a pore in the inner membrane, and an ATP-binding domain (NBD), which is responsible for energy generation. Confers resistance against macrolides. The polypeptide is Macrolide export ATP-binding/permease protein MacB (Burkholderia orbicola (strain AU 1054)).